Consider the following 339-residue polypeptide: HTH-type transcriptional regulator SyrM 2 (339 aa).

One can recognise an HTH lysR-type domain in the interval 32–89; that stretch reads VDLNLLVELEALLQYRNITHAAQHVGRSQPAMSRALSRLRDMFNDDLLVRGSSGLVPT. A DNA-binding region (H-T-H motif) is located at residues 49 to 68; sequence ITHAAQHVGRSQPAMSRALS.

This sequence belongs to the LysR transcriptional regulatory family.

In terms of biological role, acts in trans to stimulate nod gene expression. The chain is HTH-type transcriptional regulator SyrM 2 (syrM2) from Sinorhizobium fredii (strain NBRC 101917 / NGR234).